A 598-amino-acid chain; its full sequence is UvrABC system protein C (598 aa).

Residues 14-91 form the GIY-YIG domain; that stretch reads DSPGCYLHKD…IQKNMPKYNI (78 aa). The 36-residue stretch at 196-231 folds into the UVR domain; sequence DKIIEDLRSKMLAASEEMAFERAAEYRDLISGIATM.

It belongs to the UvrC family. Interacts with UvrB in an incision complex.

The protein resides in the cytoplasm. Its function is as follows. The UvrABC repair system catalyzes the recognition and processing of DNA lesions. UvrC both incises the 5' and 3' sides of the lesion. The N-terminal half is responsible for the 3' incision and the C-terminal half is responsible for the 5' incision. In Streptococcus pyogenes serotype M5 (strain Manfredo), this protein is UvrABC system protein C.